A 141-amino-acid polypeptide reads, in one-letter code: Ubiquitin-like protein ATG12 (141 aa).

Residues 24–54 (LELSPETAIPEPPSSVAVSPGTEEPPGDTKK) are disordered. Glycine 141 participates in a covalent cross-link: Glycyl lysine isopeptide (Gly-Lys) (interchain with K-? in acceptor protein).

Belongs to the ATG12 family. In terms of assembly, forms a conjugate with ATG5. Part of the minor complex composed of 4 sets of ATG12-ATG5 and ATG16L1 (400 kDa); this complex interacts with ATG3 leading to disruption of ATG7 interaction and promotion of ATG8-like proteins lipidation. Forms an 800-kDa complex composed of ATG12-ATG5 and ATG16L2. Interacts with DHX58/RIG-1, IFIH1/MDA5 and MAVS/IPS-1 in monomeric form as well as in ATG12-ATG5 conjugate. The interaction with MAVS is further enhanced upon vesicular stomatitis virus (VSV) infection. Interacts with ATG3; this interaction is essential for phosphatidylethanolamine (PE)-conjugated ATG8-like proteins formation. Interacts with ATG7. Interacts with ATG10. The ATG12-ATG5 conjugate interacts with RAB33A; this interaction is bridged by ATG16L1 and promotes ATG12-ATG5-ATG16L1 complex recruitment to phagophores. Interacts with TECPR1. Interacts with SH3BGRL. The ATG12-ATG5 conjugate interacts with PDCD6IP (via the BRO1 domain); this interaction is bridged by ATG12 and promotes multiple PDCD6IP-mediated functions such as endolysosomal trafficking, macroautophagy and exosome biogenesis. Post-translationally, acetylated by EP300.

It is found in the cytoplasm. The protein localises to the preautophagosomal structure membrane. In terms of biological role, ubiquitin-like protein involved in autophagy vesicles formation. Conjugation with ATG5 through a ubiquitin-like conjugating system involving also ATG7 as an E1-like activating enzyme and ATG10 as an E2-like conjugating enzyme, is essential for its function. The ATG12-ATG5 conjugate acts as an E3-like enzyme which is required for lipidation of ATG8 family proteins and their association to the vesicle membranes. The ATG12-ATG5 conjugate also negatively regulates the innate antiviral immune response by blocking the type I IFN production pathway through direct association with RARRES3 and MAVS. Also plays a role in translation or delivery of incoming viral RNA to the translation apparatus. As part of the ATG8 conjugation system with ATG5 and ATG16L1, required for recruitment of LRRK2 to stressed lysosomes and induction of LRRK2 kinase activity in response to lysosomal stress. The sequence is that of Ubiquitin-like protein ATG12 from Rattus norvegicus (Rat).